A 580-amino-acid polypeptide reads, in one-letter code: Formate--tetrahydrofolate ligase (580 aa).

65–72 lines the ATP pocket; that stretch reads TPHGEGKT.

The protein belongs to the formate--tetrahydrofolate ligase family.

It carries out the reaction (6S)-5,6,7,8-tetrahydrofolate + formate + ATP = (6R)-10-formyltetrahydrofolate + ADP + phosphate. Its pathway is one-carbon metabolism; tetrahydrofolate interconversion. In Shewanella baltica (strain OS223), this protein is Formate--tetrahydrofolate ligase.